Consider the following 118-residue polypeptide: Holo-[acyl-carrier-protein] synthase (118 aa).

2 residues coordinate Mg(2+): Asp8 and Glu58.

This sequence belongs to the P-Pant transferase superfamily. AcpS family. Mg(2+) serves as cofactor.

The protein resides in the cytoplasm. The catalysed reaction is apo-[ACP] + CoA = holo-[ACP] + adenosine 3',5'-bisphosphate + H(+). Its function is as follows. Transfers the 4'-phosphopantetheine moiety from coenzyme A to a Ser of acyl-carrier-protein. This is Holo-[acyl-carrier-protein] synthase from Streptococcus equi subsp. zooepidemicus (strain MGCS10565).